Here is a 385-residue protein sequence, read N- to C-terminus: UDP-N-acetylglucosamine--N-acetylmuramyl-(pentapeptide) pyrophosphoryl-undecaprenol N-acetylglucosamine transferase (385 aa).

Residues 11-13 (TGG), N117, R160, S215, and Q317 contribute to the UDP-N-acetyl-alpha-D-glucosamine site.

Belongs to the glycosyltransferase 28 family. MurG subfamily.

Its subcellular location is the cell inner membrane. The enzyme catalyses di-trans,octa-cis-undecaprenyl diphospho-N-acetyl-alpha-D-muramoyl-L-alanyl-D-glutamyl-meso-2,6-diaminopimeloyl-D-alanyl-D-alanine + UDP-N-acetyl-alpha-D-glucosamine = di-trans,octa-cis-undecaprenyl diphospho-[N-acetyl-alpha-D-glucosaminyl-(1-&gt;4)]-N-acetyl-alpha-D-muramoyl-L-alanyl-D-glutamyl-meso-2,6-diaminopimeloyl-D-alanyl-D-alanine + UDP + H(+). Its pathway is cell wall biogenesis; peptidoglycan biosynthesis. Its function is as follows. Cell wall formation. Catalyzes the transfer of a GlcNAc subunit on undecaprenyl-pyrophosphoryl-MurNAc-pentapeptide (lipid intermediate I) to form undecaprenyl-pyrophosphoryl-MurNAc-(pentapeptide)GlcNAc (lipid intermediate II). This chain is UDP-N-acetylglucosamine--N-acetylmuramyl-(pentapeptide) pyrophosphoryl-undecaprenol N-acetylglucosamine transferase, found in Rickettsia typhi (strain ATCC VR-144 / Wilmington).